Consider the following 197-residue polypeptide: ATP-dependent Clp protease proteolytic subunit 1 (197 aa).

Residue Ser88 is the Nucleophile of the active site. The active site involves His113.

This sequence belongs to the peptidase S14 family. In terms of assembly, fourteen ClpP subunits assemble into 2 heptameric rings which stack back to back to give a disk-like structure with a central cavity, resembling the structure of eukaryotic proteasomes.

The protein localises to the cytoplasm. It carries out the reaction Hydrolysis of proteins to small peptides in the presence of ATP and magnesium. alpha-casein is the usual test substrate. In the absence of ATP, only oligopeptides shorter than five residues are hydrolyzed (such as succinyl-Leu-Tyr-|-NHMec, and Leu-Tyr-Leu-|-Tyr-Trp, in which cleavage of the -Tyr-|-Leu- and -Tyr-|-Trp bonds also occurs).. In terms of biological role, cleaves peptides in various proteins in a process that requires ATP hydrolysis. Has a chymotrypsin-like activity. Plays a major role in the degradation of misfolded proteins. In Leifsonia xyli subsp. xyli (strain CTCB07), this protein is ATP-dependent Clp protease proteolytic subunit 1.